We begin with the raw amino-acid sequence, 120 residues long: Large ribosomal subunit protein bL12 (120 aa).

This sequence belongs to the bacterial ribosomal protein bL12 family. As to quaternary structure, homodimer. Part of the ribosomal stalk of the 50S ribosomal subunit. Forms a multimeric L10(L12)X complex, where L10 forms an elongated spine to which 2 to 4 L12 dimers bind in a sequential fashion. Binds GTP-bound translation factors.

Functionally, forms part of the ribosomal stalk which helps the ribosome interact with GTP-bound translation factors. Is thus essential for accurate translation. The polypeptide is Large ribosomal subunit protein bL12 (Listeria welshimeri serovar 6b (strain ATCC 35897 / DSM 20650 / CCUG 15529 / CIP 8149 / NCTC 11857 / SLCC 5334 / V8)).